Reading from the N-terminus, the 2325-residue chain is Serine/threonine-protein kinase MEC1 (2325 aa).

An FAT domain is found at 1363–1886; that stretch reads LLTTRSAECD…VWYIFSHARS (524 aa). Residues 1993–2309 enclose the PI3K/PI4K catalytic domain; that stretch reads FDDNVNIFFS…QVDVLIQEAT (317 aa). Residues 1999–2005 are G-loop; that stretch reads IFFSLQM. A catalytic loop region spans residues 2174-2182; it reads GLGDRHCEN. The activation loop stretch occupies residues 2194 to 2218; the sequence is HIDFDCLFEKGTTLPTPEIVPFRLT. An FATC domain is found at 2293-2325; the sequence is LPMNIHGQVDVLIQEATSLERLSQMYAGWAAYM.

Belongs to the PI3/PI4-kinase family. ATM subfamily.

The protein resides in the nucleus. It carries out the reaction L-seryl-[protein] + ATP = O-phospho-L-seryl-[protein] + ADP + H(+). The enzyme catalyses L-threonyl-[protein] + ATP = O-phospho-L-threonyl-[protein] + ADP + H(+). Functionally, serine/threonine protein kinase which activates checkpoint signaling upon genotoxic stresses such as ionizing radiation (IR), ultraviolet light (UV), or DNA replication stalling, thereby acting as a DNA damage sensor. Recognizes the substrate consensus sequence [ST]-Q. Recruited to DNA lesions in order to initiate the DNA repair by homologous recombination. Phosphorylates histone H2A to form H2AS128ph (gamma-H2A) at sites of DNA damage, also involved in the regulation of DNA damage response mechanism. Required for cell growth and meiotic recombination. The polypeptide is Serine/threonine-protein kinase MEC1 (MEC1) (Candida albicans (strain SC5314 / ATCC MYA-2876) (Yeast)).